The following is a 948-amino-acid chain: UvrABC system protein A (948 aa).

33 to 40 (GLSGSGKS) is a binding site for ATP. A C4-type zinc finger spans residues 252-279 (CPICGFSIGELEPRMFSFNSPFGACPTC). ABC transporter domains lie at 309–587 (WIPT…KKSL) and 607–935 (ASDR…KYLK). Residue 639–646 (GVSGSGKS) coordinates ATP. Residues 738–764 (CEACKGDGIIKIEMHFLPDVYVPCEVC) form a C4-type zinc finger.

Belongs to the ABC transporter superfamily. UvrA family. In terms of assembly, forms a heterotetramer with UvrB during the search for lesions.

It localises to the cytoplasm. Its function is as follows. The UvrABC repair system catalyzes the recognition and processing of DNA lesions. UvrA is an ATPase and a DNA-binding protein. A damage recognition complex composed of 2 UvrA and 2 UvrB subunits scans DNA for abnormalities. When the presence of a lesion has been verified by UvrB, the UvrA molecules dissociate. In Staphylococcus aureus (strain MSSA476), this protein is UvrABC system protein A.